The chain runs to 161 residues: Phosphopantetheine adenylyltransferase (161 aa).

Ser-8 serves as a coordination point for substrate. Residues Ser-8–Phe-9 and His-16 contribute to the ATP site. Substrate is bound by residues Lys-40, Thr-72, and Arg-86. Residues Gly-87–Arg-89, Glu-97, and His-122–Ser-128 each bind ATP.

It belongs to the bacterial CoaD family. As to quaternary structure, homohexamer. Mg(2+) serves as cofactor.

Its subcellular location is the cytoplasm. It carries out the reaction (R)-4'-phosphopantetheine + ATP + H(+) = 3'-dephospho-CoA + diphosphate. The protein operates within cofactor biosynthesis; coenzyme A biosynthesis; CoA from (R)-pantothenate: step 4/5. Functionally, reversibly transfers an adenylyl group from ATP to 4'-phosphopantetheine, yielding dephospho-CoA (dPCoA) and pyrophosphate. The polypeptide is Phosphopantetheine adenylyltransferase (Prochlorococcus marinus (strain SARG / CCMP1375 / SS120)).